A 423-amino-acid polypeptide reads, in one-letter code: MHDVDFIKRNPELFDYAMQNRNYEKVAQKIIELDIKKKQLLTQLYSLQKERNQITREIEKLKKDGVKCDTQIESSKNITEKINDINNMIKEDSQLIDLLNVLPNVPDDIVPVGKDESSNVEIRKHGYKRNFDFQVKTHYELGEKLNLMDFKQAAKLSGSRFVILKNQLAQLDRALANFMLDIHTKEFGYSEISHPILVHESAMYGVGQLPKFADDSFKTTENFRLVPTSEVALTNLVSGMNINSCDLPIRLTACSPCFRLEAGSAGKDTRGMMRQHQFNKVELVSIVTEEQSASELERMVQVAEEVLKRLELPYRVMMLCTGDMGFSASITYDIEVWVPSQNRYREISSCSNCKDFQARRMNTKYTTITNNVKVSKFAHTLNGSALAIGRTIIAILENYQNMDGSITIPLALRKYMNDQEFIK.

L-serine is bound at residue Thr228–Glu230. Arg259–Glu261 lines the ATP pocket. Glu282 contributes to the L-serine binding site. Glu346–Ser349 contributes to the ATP binding site. Position 384 (Ser384) interacts with L-serine.

This sequence belongs to the class-II aminoacyl-tRNA synthetase family. Type-1 seryl-tRNA synthetase subfamily. Homodimer. The tRNA molecule binds across the dimer.

The protein resides in the cytoplasm. The catalysed reaction is tRNA(Ser) + L-serine + ATP = L-seryl-tRNA(Ser) + AMP + diphosphate + H(+). The enzyme catalyses tRNA(Sec) + L-serine + ATP = L-seryl-tRNA(Sec) + AMP + diphosphate + H(+). The protein operates within aminoacyl-tRNA biosynthesis; selenocysteinyl-tRNA(Sec) biosynthesis; L-seryl-tRNA(Sec) from L-serine and tRNA(Sec): step 1/1. Catalyzes the attachment of serine to tRNA(Ser). Is also able to aminoacylate tRNA(Sec) with serine, to form the misacylated tRNA L-seryl-tRNA(Sec), which will be further converted into selenocysteinyl-tRNA(Sec). This is Serine--tRNA ligase from Ehrlichia canis (strain Jake).